The chain runs to 391 residues: MTSIRKSHLTLKALNESMIDLPAPKNISAWWNFGSLLSLCLALQILTGLFLAMHYTSDISTAFSSVVHICRDVNYGWLIRSIHANGASFFFICIYLHIGRGLYYGSYLNKEAWSAGVILLLLVMMTAFVGYVLPWGQMSFWGATVITNLLSAIPYVGENIVQWLWGGFSVDSATLTRFFAFHFLFPFGIIAMTLVHLLFLHEKGSSNPVGINSNADKIYFHPYFIYKDLIGFAWFALFLITLVLFIPNLLGDPENFTPANPLVTPPHIKPEWYFLFAYAILRSIPNKLGGVFALLASILILLIVPILHTSKWQNFAFRPLAQIFMGLLVVDVAILTWIGGMPVEPPFIIIGQIASFLYFFLFLVFFPLSGWLENKMLESCTKSSALRALVL.

Helical transmembrane passes span 33–53 (FGSLLSLCLALQILTGLFLAM), 77–98 (WLIRSIHANGASFFFICIYLHI), 113–133 (WSAGVILLLLVMMTAFVGYVL), and 178–198 (FFAFHFLFPFGIIAMTLVHLL). 2 residues coordinate heme b: histidine 83 and histidine 97. Histidine 182 and histidine 196 together coordinate heme b. Histidine 201 is a binding site for a ubiquinone. Transmembrane regions (helical) follow at residues 226–246 (YKDLIGFAWFALFLITLVLFI), 288–308 (LGGVFALLASILILLIVPILH), 320–340 (LAQIFMGLLVVDVAILTWIGG), and 347–367 (FIIIGQIASFLYFFLFLVFFP).

The protein belongs to the cytochrome b family. The cytochrome bc1 complex contains 3 respiratory subunits (MT-CYB, CYC1 and UQCRFS1), 2 core proteins (UQCRC1 and UQCRC2) and probably 6 low-molecular weight proteins. The cofactor is heme b.

Its subcellular location is the mitochondrion inner membrane. Its function is as follows. Component of the ubiquinol-cytochrome c reductase complex (complex III or cytochrome b-c1 complex) that is part of the mitochondrial respiratory chain. The b-c1 complex mediates electron transfer from ubiquinol to cytochrome c. Contributes to the generation of a proton gradient across the mitochondrial membrane that is then used for ATP synthesis. The chain is Cytochrome b (mt-cyb) from Kryptolebias marmoratus (Mangrove killifish).